A 508-amino-acid chain; its full sequence is Cytochrome P450 monooxygenase BipB (508 aa).

The chain crosses the membrane as a helical span at residues 11–31 (ELAWLLLGPLVLFYVFKLFIY). A heme-binding site is contributed by Cys448.

The protein belongs to the cytochrome P450 family. Heme is required as a cofactor.

The protein resides in the membrane. It functions in the pathway sesquiterpene biosynthesis. Functionally, cytochrome P450 monooxygenase; part of the minimal biosynthetic bip cluster that mediates the biosynthesis of bridged polycyclic sesquiterpenoids derived from sativene, isosativene, and longifolene. The sesquiterpene cyclase BipA acts as a versatile cyclase that converts farnesyl diphosphate (FPP) into (-)-sativene as the dominant product and (-)-isosativene and (-)-longifolene as minor ones. The cytochrome P450 monooxygenase BipB then hydroxylates different enantiomeric sesquiterpenes, such as (-)-longifolene and (+)-longifolene, at C-15 and C-14. The C-15- or both C-15- and C-14-hydroxylated products are further oxidized by unclustered oxidases, resulting in a structurally diverse array of sesquiterpenoids. The BipB-catalyzed hydroxylation at C-15 serves as an initiator for the oxidation by the unclustered oxidases. The polypeptide is Cytochrome P450 monooxygenase BipB (Cochliobolus sativus (Common root rot and spot blotch fungus)).